A 573-amino-acid polypeptide reads, in one-letter code: Sulfite reductase [NADPH] hemoprotein beta-component (573 aa).

Residues Cys-438, Cys-444, Cys-483, and Cys-487 each contribute to the [4Fe-4S] cluster site. Cys-487 serves as a coordination point for siroheme.

This sequence belongs to the nitrite and sulfite reductase 4Fe-4S domain family. Alpha(8)-beta(8). The alpha component is a flavoprotein, the beta component is a hemoprotein. Requires siroheme as cofactor. It depends on [4Fe-4S] cluster as a cofactor.

It carries out the reaction hydrogen sulfide + 3 NADP(+) + 3 H2O = sulfite + 3 NADPH + 4 H(+). Its pathway is sulfur metabolism; hydrogen sulfide biosynthesis; hydrogen sulfide from sulfite (NADPH route): step 1/1. Its function is as follows. Component of the sulfite reductase complex that catalyzes the 6-electron reduction of sulfite to sulfide. This is one of several activities required for the biosynthesis of L-cysteine from sulfate. This is Sulfite reductase [NADPH] hemoprotein beta-component from Staphylococcus haemolyticus (strain JCSC1435).